A 425-amino-acid chain; its full sequence is Glucose-1-phosphate adenylyltransferase (425 aa).

Alpha-D-glucose 1-phosphate is bound by residues Tyr-109, Gly-175, 190 to 191, and Ser-208; that span reads EK.

Belongs to the bacterial/plant glucose-1-phosphate adenylyltransferase family. As to quaternary structure, homotetramer.

It carries out the reaction alpha-D-glucose 1-phosphate + ATP + H(+) = ADP-alpha-D-glucose + diphosphate. Its pathway is glycan biosynthesis; glycogen biosynthesis. Its function is as follows. Involved in the biosynthesis of ADP-glucose, a building block required for the elongation reactions to produce glycogen. Catalyzes the reaction between ATP and alpha-D-glucose 1-phosphate (G1P) to produce pyrophosphate and ADP-Glc. This is Glucose-1-phosphate adenylyltransferase from Saccharophagus degradans (strain 2-40 / ATCC 43961 / DSM 17024).